Here is a 257-residue protein sequence, read N- to C-terminus: Probable ssDNA-binding protein (257 aa).

The segment at 222-257 is disordered; sequence AFMEGRENKDDDAKSGNSNAGSQKGIDQEAASDLDD. Basic and acidic residues predominate over residues 225–235; that stretch reads EGRENKDDDAK.

Its function is as follows. Required during DNA replication. Displaced viral DNA strands are transiently coated with the ssDNA-binding protein. It is then probably removed by the replisome that performs lagging strand synthesis or during the events that lead up to the recombination process. The protein is Probable ssDNA-binding protein (D11) of Escherichia phage T5 (Enterobacteria phage T5).